The primary structure comprises 251 residues: Probable transcriptional regulatory protein MMAR_2098 (251 aa).

Belongs to the TACO1 family.

The protein localises to the cytoplasm. The chain is Probable transcriptional regulatory protein MMAR_2098 from Mycobacterium marinum (strain ATCC BAA-535 / M).